The chain runs to 337 residues: Casein kinase I isoform alpha (337 aa).

Alanine 2 carries the post-translational modification N-acetylalanine. Position 4 is a phosphoserine (serine 4). At lysine 8 the chain carries N6-acetyllysine. Residues 17–285 (YKLVRKIGSG…YLRQLFRILF (269 aa)) form the Protein kinase domain. ATP-binding positions include 23 to 31 (IGSGSFGDI) and lysine 46. Catalysis depends on aspartate 136, which acts as the Proton acceptor. A compositionally biased stretch (low complexity) spans 309-325 (AASSSGQGQQAQTPTGK). Residues 309 to 337 (AASSSGQGQQAQTPTGKQTDKTKSNMKGF) form a disordered region.

This sequence belongs to the protein kinase superfamily. CK1 Ser/Thr protein kinase family. Casein kinase I subfamily. As to quaternary structure, interacts with the Axin complex. Interacts with TUT1, leading to TUT1 phosphorylation. Interacts with FAM83A, FAM83B, FAM83C, FAM83D, FAM83E, FAM83F, FAM83G and FAM83H (via DUF1669). Interaction with FAM83H recruits CSNK1A1 to keratin filaments. Post-translationally, phosphorylated by MTOR in response to mitogenic stimulation, leading to its activation.

It localises to the cytoplasm. The protein resides in the cytoskeleton. The protein localises to the microtubule organizing center. Its subcellular location is the centrosome. It is found in the chromosome. It localises to the centromere. The protein resides in the kinetochore. The protein localises to the nucleus speckle. Its subcellular location is the cilium basal body. It is found in the spindle. It catalyses the reaction L-seryl-[protein] + ATP = O-phospho-L-seryl-[protein] + ADP + H(+). It carries out the reaction L-threonyl-[protein] + ATP = O-phospho-L-threonyl-[protein] + ADP + H(+). Its function is as follows. Casein kinases are operationally defined by their preferential utilization of acidic proteins such as caseins as substrates. Can phosphorylate a large number of proteins. Participates in Wnt signaling. Phosphorylates CTNNB1 at 'Ser-45'. May phosphorylate PER1 and PER2. May play a role in segregating chromosomes during mitosis. May play a role in keratin cytoskeleton disassembly and thereby, it may regulate epithelial cell migration. Acts as a positive regulator of mTORC1 and mTORC2 signaling in response to nutrients by mediating phosphorylation of DEPTOR inhibitor. Acts as an inhibitor of NLRP3 inflammasome assembly by mediating phosphorylation of NLRP3. This chain is Casein kinase I isoform alpha (Csnk1a1), found in Mus musculus (Mouse).